The chain runs to 1024 residues: Isoleucine--tRNA ligase (1024 aa).

The 'HIGH' region motif lies at 52-62 (PTANGRPHVGH). Residues 590–594 (KMSKS) carry the 'KMSKS' region motif. An ATP-binding site is contributed by K593.

Belongs to the class-I aminoacyl-tRNA synthetase family. IleS type 2 subfamily. As to quaternary structure, monomer. Requires Zn(2+) as cofactor.

It is found in the cytoplasm. The enzyme catalyses tRNA(Ile) + L-isoleucine + ATP = L-isoleucyl-tRNA(Ile) + AMP + diphosphate. In terms of biological role, catalyzes the attachment of isoleucine to tRNA(Ile). As IleRS can inadvertently accommodate and process structurally similar amino acids such as valine, to avoid such errors it has two additional distinct tRNA(Ile)-dependent editing activities. One activity is designated as 'pretransfer' editing and involves the hydrolysis of activated Val-AMP. The other activity is designated 'posttransfer' editing and involves deacylation of mischarged Val-tRNA(Ile). In Picrophilus torridus (strain ATCC 700027 / DSM 9790 / JCM 10055 / NBRC 100828 / KAW 2/3), this protein is Isoleucine--tRNA ligase.